We begin with the raw amino-acid sequence, 434 residues long: Putative magnesium transporter MRS2-D (434 aa).

Disordered regions lie at residues 126-171 (AASP…DGEA) and 279-311 (EASE…AGGG). Over residues 279-291 (EASELEDHSSRDE) the composition is skewed to basic and acidic residues. A run of 2 helical transmembrane segments spans residues 367 to 387 (GILL…TGVF) and 405 to 425 (FPCA…AALL).

The protein belongs to the CorA metal ion transporter (MIT) (TC 1.A.35.5) family.

It localises to the membrane. Putative magnesium transporter. This is Putative magnesium transporter MRS2-D (MRS2-D) from Oryza sativa subsp. japonica (Rice).